The sequence spans 389 residues: Acetyl-CoA decarbonylase/synthase complex subunit delta (389 aa).

Belongs to the CdhD family. Heterodimer of delta and gamma chains. The ACDS complex is made up of alpha, epsilon, beta, gamma and delta chains with a probable stoichiometry of (alpha(2)epsilon(2))(4)-beta(8)-(gamma(1)delta(1))(8).

In terms of biological role, part of a complex that catalyzes the reversible cleavage of acetyl-CoA, allowing autotrophic growth from CO(2). Probably maintains the overall quaternary structure of the ACDS complex. The protein is Acetyl-CoA decarbonylase/synthase complex subunit delta of Methanothermobacter thermautotrophicus (strain ATCC 29096 / DSM 1053 / JCM 10044 / NBRC 100330 / Delta H) (Methanobacterium thermoautotrophicum).